Consider the following 348-residue polypeptide: Protein RecA (348 aa).

64 to 71 lines the ATP pocket; that stretch reads GPESSGKT. Basic and acidic residues predominate over residues 325–335; the sequence is YEIDGSSKEPL. Positions 325 to 348 are disordered; it reads YEIDGSSKEPLDEKEETLSLLDDE.

It belongs to the RecA family.

It localises to the cytoplasm. Functionally, can catalyze the hydrolysis of ATP in the presence of single-stranded DNA, the ATP-dependent uptake of single-stranded DNA by duplex DNA, and the ATP-dependent hybridization of homologous single-stranded DNAs. It interacts with LexA causing its activation and leading to its autocatalytic cleavage. The protein is Protein RecA of Listeria monocytogenes serotype 1/2a (strain 10403S).